Here is a 313-residue protein sequence, read N- to C-terminus: Ribosomal RNA small subunit methyltransferase H (313 aa).

Residues Gly35–His37, Asp55, Phe79, Asp101, and Gln108 each bind S-adenosyl-L-methionine. Residues Gln276 to Ala300 are disordered.

The protein belongs to the methyltransferase superfamily. RsmH family.

The protein resides in the cytoplasm. The enzyme catalyses cytidine(1402) in 16S rRNA + S-adenosyl-L-methionine = N(4)-methylcytidine(1402) in 16S rRNA + S-adenosyl-L-homocysteine + H(+). Its function is as follows. Specifically methylates the N4 position of cytidine in position 1402 (C1402) of 16S rRNA. In Dickeya chrysanthemi (strain Ech1591) (Dickeya zeae (strain Ech1591)), this protein is Ribosomal RNA small subunit methyltransferase H.